We begin with the raw amino-acid sequence, 256 residues long: uncharacterized protein (256 aa).

Disordered regions lie at residues M1 to H171 and N185 to D256. Residues K14–K39 adopt a coiled-coil conformation. Composition is skewed to acidic residues over residues E21–E35 and S64–E92. Basic and acidic residues predominate over residues N108–N129. The segment covering K192–G205 has biased composition (gly residues). Residues R219 to L234 show a composition bias toward basic and acidic residues.

This is an uncharacterized protein from Acanthamoeba polyphaga (Amoeba).